We begin with the raw amino-acid sequence, 492 residues long: N-succinylglutamate 5-semialdehyde dehydrogenase (492 aa).

Residue glycine 220–glycine 225 participates in NAD(+) binding. Catalysis depends on residues glutamate 243 and cysteine 277.

The protein belongs to the aldehyde dehydrogenase family. AstD subfamily.

The enzyme catalyses N-succinyl-L-glutamate 5-semialdehyde + NAD(+) + H2O = N-succinyl-L-glutamate + NADH + 2 H(+). Its pathway is amino-acid degradation; L-arginine degradation via AST pathway; L-glutamate and succinate from L-arginine: step 4/5. Functionally, catalyzes the NAD-dependent reduction of succinylglutamate semialdehyde into succinylglutamate. This chain is N-succinylglutamate 5-semialdehyde dehydrogenase, found in Shigella boydii serotype 18 (strain CDC 3083-94 / BS512).